The primary structure comprises 197 residues: Imidazoleglycerol-phosphate dehydratase (197 aa).

It belongs to the imidazoleglycerol-phosphate dehydratase family.

It is found in the cytoplasm. The enzyme catalyses D-erythro-1-(imidazol-4-yl)glycerol 3-phosphate = 3-(imidazol-4-yl)-2-oxopropyl phosphate + H2O. Its pathway is amino-acid biosynthesis; L-histidine biosynthesis; L-histidine from 5-phospho-alpha-D-ribose 1-diphosphate: step 6/9. The protein is Imidazoleglycerol-phosphate dehydratase of Clostridium acetobutylicum (strain ATCC 824 / DSM 792 / JCM 1419 / IAM 19013 / LMG 5710 / NBRC 13948 / NRRL B-527 / VKM B-1787 / 2291 / W).